A 149-amino-acid polypeptide reads, in one-letter code: Internal scaffolding protein ORF3 (149 aa).

The protein belongs to the microvidae B protein family.

The protein localises to the host cytoplasm. Participates in the assembly of the viral procapsid in the cytoplasm. Released from the procapsid upon genome packaging, possibly through affinity displacement by the protein ORF8, or by proteolysis. The sequence is that of Internal scaffolding protein ORF3 from Spiroplasma virus 4 (SpV4).